A 91-amino-acid chain; its full sequence is MENRDIIKRPVITERSSEQMAQDKYTFDVDTRANKTQIKIAIEDIFNVKVDKVNVMNYKAKKKRVGRYNGYTNKRRKAIVTLKEGSIDFFN.

Belongs to the universal ribosomal protein uL23 family. As to quaternary structure, part of the 50S ribosomal subunit. Contacts protein L29, and trigger factor when it is bound to the ribosome.

Its function is as follows. One of the early assembly proteins it binds 23S rRNA. One of the proteins that surrounds the polypeptide exit tunnel on the outside of the ribosome. Forms the main docking site for trigger factor binding to the ribosome. The chain is Large ribosomal subunit protein uL23 from Macrococcus caseolyticus (strain JCSC5402) (Macrococcoides caseolyticum).